A 497-amino-acid chain; its full sequence is Glycerol kinase (497 aa).

Thr-11 provides a ligand contact to ADP. Thr-11, Thr-12, and Ser-13 together coordinate ATP. Thr-11 contacts sn-glycerol 3-phosphate. Arg-15 is a binding site for ADP. Sn-glycerol 3-phosphate contacts are provided by Arg-81, Glu-82, Tyr-134, and Asp-244. The glycerol site is built by Arg-81, Glu-82, Tyr-134, Asp-244, and Gln-245. ADP-binding residues include Thr-266 and Gly-309. ATP contacts are provided by Thr-266, Gly-309, Gln-313, and Gly-410. Residues Gly-410 and Asn-414 each contribute to the ADP site.

It belongs to the FGGY kinase family.

The catalysed reaction is glycerol + ATP = sn-glycerol 3-phosphate + ADP + H(+). It participates in polyol metabolism; glycerol degradation via glycerol kinase pathway; sn-glycerol 3-phosphate from glycerol: step 1/1. Its activity is regulated as follows. Inhibited by fructose 1,6-bisphosphate (FBP). In terms of biological role, key enzyme in the regulation of glycerol uptake and metabolism. Catalyzes the phosphorylation of glycerol to yield sn-glycerol 3-phosphate. The protein is Glycerol kinase of Fusobacterium nucleatum subsp. nucleatum (strain ATCC 25586 / DSM 15643 / BCRC 10681 / CIP 101130 / JCM 8532 / KCTC 2640 / LMG 13131 / VPI 4355).